A 288-amino-acid polypeptide reads, in one-letter code: DegV domain-containing protein SAS0714 (288 aa).

The DegV domain occupies 3–282 (IAVMTDSTSY…SGGLGLGYVG (280 aa)). The hexadecanoate site is built by Thr-62 and Ser-95.

Its function is as follows. May bind long-chain fatty acids, such as palmitate, and may play a role in lipid transport or fatty acid metabolism. The polypeptide is DegV domain-containing protein SAS0714 (Staphylococcus aureus (strain MSSA476)).